Here is a 296-residue protein sequence, read N- to C-terminus: MAAGGPAAGSAAPISSTSSLPLAALNMRVRRRLSLFLNVRTQVAADWTALAEEMDFEYLEIRQLETHADPTGRLLDAWQGRPGASVGRLLELLTKLGRDDVLLELGPSIEEDCQKYILKQQQEEAEKPLQVAAVDSSVPRTAELAGITTLDDPLGHMPERFDAFICYCPSDIQFVQEMIRQLEQTNYRLKLCVSDRDVLPGTCVWSIASELIEKRCRRMVVVVSDDYLQSKECDFQTKFALSLSPGAHQKRLIPIKYKAMKKEFPSILRFITVCDYTNPCTKSWFWTRLAKALSLP.

Positions 32–109 constitute a Death domain; it reads RLSLFLNVRT…DVLLELGPSI (78 aa). An intermediate domain region spans residues 110–155; that stretch reads EEDCQKYILKQQQEEAEKPLQVAAVDSSVPRTAELAGITTLDDPLG. In terms of domain architecture, TIR spans 159–293; that stretch reads ERFDAFICYC…WFWTRLAKAL (135 aa). At serine 244 the chain carries Phosphoserine.

As to quaternary structure, homodimer. Also forms heterodimers with TIRAP. Binds to TLR2, TLR4, IRAK1, IRAK2 and IRAK4 via their respective TIR domains. Interacts with IL18R1. Interacts with BMX, IL1RL1, IKBKE and IRF7. Interacts with LRRFIP1 and LRRFIP2; this interaction positively regulates Toll-like receptor (TLR) signaling in response to agonist. Interacts with FLII. LRRFIP1 and LRRFIP2 compete with FLII for MYD88-binding. Interacts with IRF1. Upon IL1B treatment, forms a complex with PELI1, IRAK1, IRAK4 and TRAF6; this complex recruits MAP3K7/TAK1, TAB1 and TAB2 to mediate NF-kappa-B activation. Direct binding of SMAD6 to PELI1 prevents the complex formation and hence negatively regulates IL1R-TLR signaling and eventually NF-kappa-B-mediated gene expression. May interact with PIK3AP1. Interacts (via TIR domain) with DHX9 (via H2A and OB-fold regions); this interaction is direct. Interacts with OTUD4 deubiquitinase; the interaction is direct. In terms of processing, ubiquitinated; undergoes 'Lys-63'-linked polyubiquitination. OTUD4 specifically hydrolyzes 'Lys-63'-linked polyubiquitinated MYD88. Deubiquitinated by USP3 that cleaves 'Lys-63'-linked ubiquitin chains leading to inhibition of MYD88-induced NF-kappa-B signaling.

The protein localises to the cytoplasm. It is found in the nucleus. In terms of biological role, adapter protein involved in the Toll-like receptor and IL-1 receptor signaling pathway in the innate immune response. Acts via IRAK1, IRAK2, IRF7 and TRAF6, leading to NF-kappa-B activation, cytokine secretion and the inflammatory response. Increases IL-8 transcription. Involved in IL-18-mediated signaling pathway. Activates IRF1 resulting in its rapid migration into the nucleus to mediate an efficient induction of IFN-beta, NOS2/INOS, and IL12A genes. Upon TLR8 activation by GU-rich single-stranded RNA (GU-rich RNA) derived from viruses, induces IL1B release through NLRP3 inflammasome activation. MyD88-mediated signaling in intestinal epithelial cells is crucial for maintenance of gut homeostasis and controls the expression of the antimicrobial lectin REG3G in the small intestine. The chain is Myeloid differentiation primary response protein MyD88 (MYD88) from Pan troglodytes (Chimpanzee).